The chain runs to 231 residues: 7-cyano-7-deazaguanine synthase (231 aa).

Residue Phe8–Leu18 participates in ATP binding. Zn(2+) is bound by residues Cys188, Cys197, Cys200, and Cys203.

Belongs to the QueC family. The cofactor is Zn(2+).

It carries out the reaction 7-carboxy-7-deazaguanine + NH4(+) + ATP = 7-cyano-7-deazaguanine + ADP + phosphate + H2O + H(+). The protein operates within purine metabolism; 7-cyano-7-deazaguanine biosynthesis. Its function is as follows. Catalyzes the ATP-dependent conversion of 7-carboxy-7-deazaguanine (CDG) to 7-cyano-7-deazaguanine (preQ(0)). This is 7-cyano-7-deazaguanine synthase from Salmonella schwarzengrund (strain CVM19633).